Reading from the N-terminus, the 45-residue chain is Photosystem II reaction center protein K (45 aa).

The propeptide occupies 1-8; that stretch reads MELMLLFA. A helical membrane pass occupies residues 24-44; that stretch reads LPVIPVLFLALAFVWQASVGF.

It belongs to the PsbK family. As to quaternary structure, PSII is composed of 1 copy each of membrane proteins PsbA, PsbB, PsbC, PsbD, PsbE, PsbF, PsbH, PsbI, PsbJ, PsbK, PsbL, PsbM, PsbT, PsbX, PsbY, PsbZ, Psb30/Ycf12, peripheral proteins PsbO, CyanoQ (PsbQ), PsbU, PsbV and a large number of cofactors. It forms dimeric complexes.

It localises to the cellular thylakoid membrane. Its function is as follows. One of the components of the core complex of photosystem II (PSII). PSII is a light-driven water:plastoquinone oxidoreductase that uses light energy to abstract electrons from H(2)O, generating O(2) and a proton gradient subsequently used for ATP formation. It consists of a core antenna complex that captures photons, and an electron transfer chain that converts photonic excitation into a charge separation. The protein is Photosystem II reaction center protein K of Cyanothece sp. (strain PCC 7425 / ATCC 29141).